The sequence spans 162 residues: uncharacterized protein (162 aa).

A signal peptide spans 1–23 (MLSLKSPAVLLSMVILVPLFALA).

This is an uncharacterized protein from Mycosarcoma maydis (Corn smut fungus).